A 296-amino-acid chain; its full sequence is Endochitinase 3 (296 aa).

Residues 12–296 enclose the GH18 domain; sequence HKLTVYWGAE…VKNGQLPEED (285 aa). Residues N32 and N152 are each glycosylated (N-linked (GlcNAc...) asparagine). E153 serves as the catalytic Proton donor. N228 is a glycosylation site (N-linked (GlcNAc...) asparagine).

Belongs to the glycosyl hydrolase 18 family. Chitinase class III subfamily.

It localises to the secreted. The enzyme catalyses Random endo-hydrolysis of N-acetyl-beta-D-glucosaminide (1-&gt;4)-beta-linkages in chitin and chitodextrins.. Its function is as follows. Secreted chitinase involved in the degradation of chitin, a component of the cell walls of fungi and exoskeletal elements of some animals (including worms and arthropods). Participates in the infection process and directly acts in the penetration process of the host cuticle. Involved in heat-shock adaptation. This Metarhizium anisopliae (Entomophthora anisopliae) protein is Endochitinase 3 (chi3).